Reading from the N-terminus, the 1723-residue chain is Homeobox protein 5 (1723 aa).

Residues 36 to 50 (QLQQPQHQPQHYQQQ) show a composition bias toward low complexity. 9 disordered regions span residues 36 to 425 (QLQQ…APGT), 440 to 522 (SSSP…QLQQ), 543 to 756 (ENIT…PPLT), 878 to 978 (GTIV…TGSL), 1080 to 1214 (IFNN…SENN), 1226 to 1264 (VSLG…NQQQ), 1345 to 1399 (IVNN…TQTS), 1456 to 1498 (QQQQ…STTT), and 1513 to 1547 (HNQQ…SRRK). Polar residues predominate over residues 51–72 (DSFVSPNLDNNNPQIHVQSNNY). Composition is skewed to low complexity over residues 73–107 (NQNG…NNSS) and 114–212 (NNSS…NNNN). Polar residues-rich tracts occupy residues 223-237 (SQPT…QHNP) and 244-257 (GQHN…MVMD). Composition is skewed to low complexity over residues 258–284 (NNNN…NSNS) and 291–350 (NNNN…NNNN). Residues 300–351 (YNNNNNNNNNNNSNSNNNNNNNNNNNNNNNNNNNNNNNNNNNNNSNNNNNNQ) are a coiled coil. The segment covering 351-369 (QFSQSYDSTLGNNRFSSMM) has biased composition (polar residues). Low complexity-rich tracts occupy residues 371-421 (QPIQ…LIGS) and 440-465 (SSSP…LSSS). Residues 483–510 (MSSITNTNLKSTQASTLKESKRSNSSPN) show a composition bias toward polar residues. Composition is skewed to low complexity over residues 511–522 (LKKQMQLQQLQQ), 544–571 (NITN…ITNN), and 581–593 (NSNN…DSIN). A compositionally biased stretch (polar residues) spans 632-655 (HISTTQQSPSLNGSTGGSMLTPTM). Positions 660–669 (LSGGGSGGGF) are enriched in gly residues. The segment covering 673–685 (ISPTGTTSNKDLQ) has biased composition (polar residues). Composition is skewed to low complexity over residues 686-699 (SSPS…SMSM), 710-727 (SMSS…SNGL), and 734-745 (SNNMNSSGGIPT). The span at 746–755 (PSTPTSPPPL) shows a compositional bias: pro residues. Positions 882–928 (NPTNVNNNNINNNNNNNNNNNNNNNNNNNNNNNNNNNNTTTTTTTTT) are enriched in low complexity. The span at 929-945 (SANTVQSGTTSNSNLVF) shows a compositional bias: polar residues. 2 stretches are compositionally biased toward low complexity: residues 946-977 (QQTS…STGS) and 1082-1146 (NNNN…SINS). Polar residues-rich tracts occupy residues 1147–1159 (PRPS…NSSG) and 1176–1187 (DISTGLMASSDQ). The stretch at 1193 to 1270 (QQQQHQQLVN…NQQQILHQQL (78 aa)) forms a coiled coil. The span at 1194–1214 (QQQHQQLVNNNNNNMNNSENN) shows a compositional bias: low complexity. A compositionally biased stretch (polar residues) spans 1226-1242 (VSLGSLPTNTPSSMEIE). 5 stretches are compositionally biased toward low complexity: residues 1243–1264 (QQQQ…NQQQ), 1347–1384 (NNQN…TNTP), 1456–1480 (QQQQ…RSSP), 1487–1498 (SNTNTTTTSTTT), and 1518–1528 (SPISPRSPRSP). A coiled-coil region spans residues 1431-1464 (VLQQQQQQQQQQQQQQQQQQQQQQQQQQQQQQET). Polar residues predominate over residues 1529-1543 (HGTSGDYNDGSQSPS). Positions 1543–1607 (SSRRKNRFTD…NKRARSRPSP (65 aa)) form a DNA-binding region, homeobox. The EF-hand domain occupies 1553–1588 (FQIKRMNDCFENLDKNNNGKFTSEEICQIATELGLT). Disordered regions lie at residues 1598-1625 (NKRA…GNNS) and 1661-1723 (LHQQ…TINE). Residues 1612-1625 (TNPLTSSTNNGNNS) are compositionally biased toward low complexity. A coiled-coil region spans residues 1632–1702 (LQQQHLQQVQ…NNNNNNNNNN (71 aa)). Residues 1665–1675 (SANTTPQLNSM) show a composition bias toward polar residues. Low complexity predominate over residues 1676-1723 (NPNSINYNNNNNNNNNNNNNNNNNNNNNNNNNNNNNNIINNNITTINE).

It localises to the nucleus. Putative transcription factor. This Dictyostelium discoideum (Social amoeba) protein is Homeobox protein 5 (hbx5-1).